Here is a 513-residue protein sequence, read N- to C-terminus: Activin receptor type-2A (513 aa).

The first 19 residues, 1 to 19 (MGAATKLAFAVFLISCSSG), serve as a signal peptide directing secretion. The Extracellular portion of the chain corresponds to 20–139 (AILGRSETQE…VTPKPPLFNT (120 aa)). 5 disulfides stabilise this stretch: Cys30/Cys60, Cys50/Cys78, Cys85/Cys104, Cys91/Cys103, and Cys105/Cys110. Residues Asn43 and Asn66 are each glycosylated (N-linked (GlcNAc...) asparagine). The helical transmembrane segment at 140–160 (LLYSLVPIMGIAVIVLFSFWM) threads the bilayer. Residues 161-513 (YRHHKLAYPP…VDFPPKESSL (353 aa)) lie on the Cytoplasmic side of the membrane. Positions 192 to 485 (LQLLEIKARG…EERIIQMQKL (294 aa)) constitute a Protein kinase domain. Residues 198–206 (KARGRFGCV) and Lys219 contribute to the ATP site. The active-site Proton acceptor is the Asp322.

It belongs to the protein kinase superfamily. TKL Ser/Thr protein kinase family. TGFB receptor subfamily. It depends on Mg(2+) as a cofactor. Requires Mn(2+) as cofactor. In terms of tissue distribution, expressed in hen anterior pituitary during the ovulatory cycle and in the ovarian follicle.

Its subcellular location is the cell membrane. The catalysed reaction is L-threonyl-[receptor-protein] + ATP = O-phospho-L-threonyl-[receptor-protein] + ADP + H(+). It catalyses the reaction L-seryl-[receptor-protein] + ATP = O-phospho-L-seryl-[receptor-protein] + ADP + H(+). Its function is as follows. On ligand binding, forms a receptor complex consisting of two type II and two type I transmembrane serine/threonine kinases. Type II receptors phosphorylate and activate type I receptors which autophosphorylate, then bind and activate SMAD transcriptional regulators. Receptor for activin A, activin B and inhibin A. May modulate neuropeptide expression in dorsal root ganglia (DRG) neurons and ovarian follicle development. The protein is Activin receptor type-2A (ACVR2A) of Gallus gallus (Chicken).